We begin with the raw amino-acid sequence, 369 residues long: MIALLIGAGLALLCALVGTPLFIRLLVRRGYGQFIRDDGPTSHHTKRGTPTMGGTVVVAAVLLSYGLTHLIMFLMNPDSPGPSASALILLFLMVGMGLVGFLDDFIKISRQRSLGLNAKAKLILQAAVGVIFAVLALNFPDESGLAPASTKISLVRDLPWLDLAFGGTVLGAILFVVWSNLIVTAATNGVNLTDGLDGLAAGASVMVFGAYTLMGIWQSNQACGSPREAGSGCYSVRDPLDLALLAAIMSAALVGFLWWNTSPAKIFMGDTGSLAIGGAIAGFAILSRTELLLGIIGGLFVLITLSVIIQVGYFKATGGKRVFKMAPLQHHFELKGWAEVTVVVRFWILGGLFVAVGLGIFYAEWVVLL.

10 consecutive transmembrane segments (helical) span residues 2 to 22 (IALLIGAGLALLCALVGTPLF), 55 to 75 (TVVVAAVLLSYGLTHLIMFLM), 86 to 106 (ALILLFLMVGMGLVGFLDDFI), 120 to 140 (AKLILQAAVGVIFAVLALNFP), 163 to 183 (LAFGGTVLGAILFVVWSNLIV), 196 to 216 (LDGLAAGASVMVFGAYTLMGI), 239 to 259 (PLDLALLAAIMSAALVGFLWW), 266 to 286 (IFMGDTGSLAIGGAIAGFAIL), 291 to 311 (LLLGIIGGLFVLITLSVIIQV), and 348 to 368 (ILGGLFVAVGLGIFYAEWVVL).

This sequence belongs to the glycosyltransferase 4 family. MraY subfamily. It depends on Mg(2+) as a cofactor.

The protein localises to the cell membrane. The catalysed reaction is UDP-N-acetyl-alpha-D-muramoyl-L-alanyl-gamma-D-glutamyl-meso-2,6-diaminopimeloyl-D-alanyl-D-alanine + di-trans,octa-cis-undecaprenyl phosphate = di-trans,octa-cis-undecaprenyl diphospho-N-acetyl-alpha-D-muramoyl-L-alanyl-D-glutamyl-meso-2,6-diaminopimeloyl-D-alanyl-D-alanine + UMP. Its pathway is cell wall biogenesis; peptidoglycan biosynthesis. Catalyzes the initial step of the lipid cycle reactions in the biosynthesis of the cell wall peptidoglycan: transfers peptidoglycan precursor phospho-MurNAc-pentapeptide from UDP-MurNAc-pentapeptide onto the lipid carrier undecaprenyl phosphate, yielding undecaprenyl-pyrophosphoryl-MurNAc-pentapeptide, known as lipid I. This Pseudarthrobacter chlorophenolicus (strain ATCC 700700 / DSM 12829 / CIP 107037 / JCM 12360 / KCTC 9906 / NCIMB 13794 / A6) (Arthrobacter chlorophenolicus) protein is Phospho-N-acetylmuramoyl-pentapeptide-transferase.